The primary structure comprises 163 residues: Photosystem II extrinsic protein V (163 aa).

The signal sequence occupies residues 1–26; that stretch reads MFKTYSKSFACILFCIFNIFVVSASA. Heme c-binding residues include cysteine 63, cysteine 66, histidine 67, and methionine 130.

Belongs to the cytochrome c family. PsbV subfamily. As to quaternary structure, PSII is composed of 1 copy each of membrane proteins PsbA, PsbB, PsbC, PsbD, PsbE, PsbF, PsbH, PsbI, PsbJ, PsbK, PsbL, PsbM, PsbT, PsbY, PsbZ, Psb30/Ycf12, at least 3 peripheral proteins of the oxygen-evolving complex and a large number of cofactors. It forms dimeric complexes. Heme c is required as a cofactor.

It is found in the plastid. The protein localises to the chloroplast thylakoid membrane. Its function is as follows. One of the extrinsic, lumenal subunits of photosystem II (PSII). PSII is a light-driven water plastoquinone oxidoreductase, using light energy to abstract electrons from H(2)O, generating a proton gradient subsequently used for ATP formation. The extrinsic proteins stabilize the structure of photosystem II oxygen-evolving complex (OEC), the ion environment of oxygen evolution and protect the OEC against heat-induced inactivation. This chain is Photosystem II extrinsic protein V, found in Thalassiosira pseudonana (Marine diatom).